A 102-amino-acid polypeptide reads, in one-letter code: MIVPLLHILILAGILFVLGLVCTMVWRMNIIMMLIGIEIMLNAAMLAFVGAANRWGTADGQVFSLMIMAMTSAEVSLALALVVYLHRWRKTVNADDFNSMKG.

Helical transmembrane passes span 1–21, 30–50, and 65–85; these read MIVP…LGLV, IIMM…AFVG, and LMIM…VVYL.

The protein belongs to the complex I subunit 4L family. In terms of assembly, NDH-1 is composed of 14 different subunits. Subunits NuoA, H, J, K, L, M, N constitute the membrane sector of the complex.

The protein localises to the cell inner membrane. The enzyme catalyses a quinone + NADH + 5 H(+)(in) = a quinol + NAD(+) + 4 H(+)(out). Functionally, NDH-1 shuttles electrons from NADH, via FMN and iron-sulfur (Fe-S) centers, to quinones in the respiratory chain. The immediate electron acceptor for the enzyme in this species is believed to be ubiquinone. Couples the redox reaction to proton translocation (for every two electrons transferred, four hydrogen ions are translocated across the cytoplasmic membrane), and thus conserves the redox energy in a proton gradient. The sequence is that of NADH-quinone oxidoreductase subunit K 2 from Geotalea daltonii (strain DSM 22248 / JCM 15807 / FRC-32) (Geobacter daltonii).